Consider the following 209-residue polypeptide: dITP/XTP pyrophosphatase (209 aa).

7–12 (SSHGYK) contributes to the substrate binding site. Residue Asp-70 is the Proton acceptor of the active site. Asp-70 serves as a coordination point for Mg(2+). Substrate is bound by residues Ser-71, 154 to 157 (FGYD), Lys-177, and 182 to 183 (HR).

Belongs to the HAM1 NTPase family. As to quaternary structure, homodimer. Requires Mg(2+) as cofactor.

The enzyme catalyses XTP + H2O = XMP + diphosphate + H(+). The catalysed reaction is dITP + H2O = dIMP + diphosphate + H(+). It carries out the reaction ITP + H2O = IMP + diphosphate + H(+). Functionally, pyrophosphatase that catalyzes the hydrolysis of nucleoside triphosphates to their monophosphate derivatives, with a high preference for the non-canonical purine nucleotides XTP (xanthosine triphosphate), dITP (deoxyinosine triphosphate) and ITP. Seems to function as a house-cleaning enzyme that removes non-canonical purine nucleotides from the nucleotide pool, thus preventing their incorporation into DNA/RNA and avoiding chromosomal lesions. The polypeptide is dITP/XTP pyrophosphatase (Chlamydia trachomatis serovar L2 (strain ATCC VR-902B / DSM 19102 / 434/Bu)).